Consider the following 400-residue polypeptide: Formate-dependent phosphoribosylglycinamide formyltransferase (400 aa).

Residues Glu-22–Leu-23 and Glu-82 contribute to the N(1)-(5-phospho-beta-D-ribosyl)glycinamide site. ATP contacts are provided by residues Arg-115, Lys-156, Ser-161–Gln-166, Glu-196–Ile-199, and Glu-204. One can recognise an ATP-grasp domain in the interval Arg-120–Leu-309. Glu-268 and Glu-280 together coordinate Mg(2+). N(1)-(5-phospho-beta-D-ribosyl)glycinamide is bound by residues Asp-287, Lys-361, and Arg-368–Arg-369.

This sequence belongs to the PurK/PurT family. In terms of assembly, homodimer.

The enzyme catalyses N(1)-(5-phospho-beta-D-ribosyl)glycinamide + formate + ATP = N(2)-formyl-N(1)-(5-phospho-beta-D-ribosyl)glycinamide + ADP + phosphate + H(+). It functions in the pathway purine metabolism; IMP biosynthesis via de novo pathway; N(2)-formyl-N(1)-(5-phospho-D-ribosyl)glycinamide from N(1)-(5-phospho-D-ribosyl)glycinamide (formate route): step 1/1. Its function is as follows. Involved in the de novo purine biosynthesis. Catalyzes the transfer of formate to 5-phospho-ribosyl-glycinamide (GAR), producing 5-phospho-ribosyl-N-formylglycinamide (FGAR). Formate is provided by PurU via hydrolysis of 10-formyl-tetrahydrofolate. The protein is Formate-dependent phosphoribosylglycinamide formyltransferase of Xanthomonas oryzae pv. oryzae (strain KACC10331 / KXO85).